Reading from the N-terminus, the 982-residue chain is NACHT, LRR and PYD domains-containing protein 4C (982 aa).

The Pyrin domain maps to 1–93; it reads MASFFSDFGL…MERAGREIAG (93 aa). The 324-residue stretch at 148-471 folds into the NACHT domain; sequence HMVFLQGAAG…FYLLKSHMDH (324 aa). An ATP-binding site is contributed by 154 to 161; it reads GAAGIGKS. LRR repeat units lie at residues 594-617, 689-716, 746-773, 802-825, 827-844, 859-882, and 916-940; these read CSTL…HSYT, NQCL…VLSQ, SKML…LCHP, NKTL…VLCG, LSLP…YCLI, NQNL…LLCD, and CKTL…LFEA.

This sequence belongs to the NLRP family.

May be involved in inflammation and recognition of cytosolic pathogen-associated molecular patterns (PAMPs) not intercepted by membrane-bound receptors. This chain is NACHT, LRR and PYD domains-containing protein 4C (Nlrp4c), found in Mus musculus (Mouse).